Here is a 186-residue protein sequence, read N- to C-terminus: Homeobox expressed in ES cells 1 (186 aa).

The segment at residues 109-168 is a DNA-binding region (homeobox); that stretch reads GRRPRTAFTRSQIEILENVFRVNSYPGIDIREELAGKLALDEDRIQIWFQNRRAKLKRSH.

The protein belongs to the ANF homeobox family. In terms of assembly, interacts (via N-terminus) with zyx.

It localises to the nucleus. Its function is as follows. Regulates the earliest stages of development of the anterior neural plate. Plays a role in forebrain development by inhibiting the expression of otx2 and pax6 in the rostral region of the anterior neural plate. Necessary for both neural differentiation and neural patterning. Controls Spemann organizer development. May act as a transcriptional repressor. The polypeptide is Homeobox expressed in ES cells 1 (Xenopus tropicalis (Western clawed frog)).